The primary structure comprises 291 residues: 33 kDa chaperonin (291 aa).

Cystine bridges form between Cys229-Cys231 and Cys262-Cys265.

This sequence belongs to the HSP33 family. In terms of processing, under oxidizing conditions two disulfide bonds are formed involving the reactive cysteines. Under reducing conditions zinc is bound to the reactive cysteines and the protein is inactive.

It is found in the cytoplasm. Functionally, redox regulated molecular chaperone. Protects both thermally unfolding and oxidatively damaged proteins from irreversible aggregation. Plays an important role in the bacterial defense system toward oxidative stress. The polypeptide is 33 kDa chaperonin (Aliivibrio salmonicida (strain LFI1238) (Vibrio salmonicida (strain LFI1238))).